A 264-amino-acid polypeptide reads, in one-letter code: Origin recognition complex subunit 6 (264 aa).

This sequence belongs to the ORC6 family. ORC is composed of six subunits. ORC interacts with cdc18, recruiting it to the ars1 origin of replication.

It localises to the nucleus. Component of the origin recognition complex (ORC) that binds origins of replication. It has a role in both chromosomal replication and mating type transcriptional silencing. ORC binds to multiple sites within the ars1 origin of DNA replication in an ATP-independent manner. The protein is Origin recognition complex subunit 6 (orc6) of Schizosaccharomyces pombe (strain 972 / ATCC 24843) (Fission yeast).